Here is a 969-residue protein sequence, read N- to C-terminus: Rab3 GTPase-activating protein catalytic subunit (969 aa).

Over residues 532-549 (DDGKKSSSSDGARDRSRG) the composition is skewed to basic and acidic residues. Positions 532-613 (DDGKKSSSSD…PEGRLQPHGT (82 aa)) are disordered. Over residues 550-572 (APEGAGPEGAGPAEAAGKSWDSW) the composition is skewed to low complexity. Positions 573–589 (SDSEDEFFECVSDTEEM) are enriched in acidic residues. Residues 590-608 (KEDKEEAENRSRSKPEGRL) show a composition bias toward basic and acidic residues.

The protein belongs to the Rab3-GAP catalytic subunit family. As to quaternary structure, the Rab3 GTPase-activating complex is a heterodimer composed of rab3gap1 and rab3gap2. The Rab3 GTPase-activating complex interacts with DMXL2. Interacts with LMAN1.

It localises to the cytoplasm. The protein localises to the endoplasmic reticulum. Its subcellular location is the golgi apparatus. It is found in the cis-Golgi network. Functionally, catalytic subunit of the Rab3 GTPase-activating (Rab3GAP) complex composed of rab3gap1 and rab3gap2, which has GTPase-activating protein (GAP) activity towards various Rab3 subfamily members (RAB3A, RAB3B, RAB3C and RAB3D), RAB5A and RAB43, and guanine nucleotide exchange factor (GEF) activity towards RAB18. As part of the Rab3GAP complex, acts as a GAP for Rab3 proteins by converting active RAB3-GTP to the inactive form RAB3-GDP. Rab3 proteins are involved in regulated exocytosis of neurotransmitters and hormones. The Rab3GAP complex, acts as a GEF for RAB18 by promoting the conversion of inactive RAB18-GDP to the active form RAB18-GTP. Recruits and stabilizes RAB18 at the cis-Golgi membrane where RAB18 is most likely activated. Also involved in RAB18 recruitment at the endoplasmic reticulum (ER) membrane where it maintains proper ER structure. Required for normal eye and brain development. May participate in neurodevelopmental processes such as proliferation, migration and differentiation before synapse formation, and non-synaptic vesicular release of neurotransmitters. The sequence is that of Rab3 GTPase-activating protein catalytic subunit (rab3gap1) from Danio rerio (Zebrafish).